Here is a 156-residue protein sequence, read N- to C-terminus: UPF0178 protein Jann_2168 (156 aa).

It belongs to the UPF0178 family.

This is UPF0178 protein Jann_2168 from Jannaschia sp. (strain CCS1).